The sequence spans 440 residues: Thymidine phosphorylase (440 aa).

It belongs to the thymidine/pyrimidine-nucleoside phosphorylase family. In terms of assembly, homodimer.

It carries out the reaction thymidine + phosphate = 2-deoxy-alpha-D-ribose 1-phosphate + thymine. Its pathway is pyrimidine metabolism; dTMP biosynthesis via salvage pathway; dTMP from thymine: step 1/2. The enzymes which catalyze the reversible phosphorolysis of pyrimidine nucleosides are involved in the degradation of these compounds and in their utilization as carbon and energy sources, or in the rescue of pyrimidine bases for nucleotide synthesis. This chain is Thymidine phosphorylase, found in Shigella dysenteriae serotype 1 (strain Sd197).